The following is a 401-amino-acid chain: CCA-adding enzyme (401 aa).

ATP contacts are provided by glycine 32 and arginine 35. CTP is bound by residues glycine 32 and arginine 35. Mg(2+) is bound by residues aspartate 45 and aspartate 47. ATP is bound by residues arginine 116, aspartate 159, arginine 162, arginine 165, and arginine 168. Residues arginine 116, aspartate 159, arginine 162, arginine 165, and arginine 168 each coordinate CTP.

Belongs to the tRNA nucleotidyltransferase/poly(A) polymerase family. Bacterial CCA-adding enzyme type 3 subfamily. Homodimer. Mg(2+) is required as a cofactor.

The enzyme catalyses a tRNA precursor + 2 CTP + ATP = a tRNA with a 3' CCA end + 3 diphosphate. The catalysed reaction is a tRNA with a 3' CCA end + 2 CTP + ATP = a tRNA with a 3' CCACCA end + 3 diphosphate. Catalyzes the addition and repair of the essential 3'-terminal CCA sequence in tRNAs without using a nucleic acid template. Adds these three nucleotides in the order of C, C, and A to the tRNA nucleotide-73, using CTP and ATP as substrates and producing inorganic pyrophosphate. tRNA 3'-terminal CCA addition is required both for tRNA processing and repair. Also involved in tRNA surveillance by mediating tandem CCA addition to generate a CCACCA at the 3' terminus of unstable tRNAs. While stable tRNAs receive only 3'-terminal CCA, unstable tRNAs are marked with CCACCA and rapidly degraded. This chain is CCA-adding enzyme, found in Streptococcus mutans serotype c (strain ATCC 700610 / UA159).